An 868-amino-acid polypeptide reads, in one-letter code: Coatomer subunit gamma (868 aa).

The segment covering 1-11 (MWRTKRGRTRR) has biased composition (basic residues). The tract at residues 1-22 (MWRTKRGRTRRRDAGGNPWQNL) is disordered. HEAT repeat units lie at residues 64 to 101 (REAT…IADD), 287 to 324 (RELS…LHPP), 326 to 359 (VNVC…GAES), and 360 to 396 (SVER…KFPR).

The protein belongs to the COPG family. As to quaternary structure, oligomeric complex that consists of at least the alpha, beta, beta', gamma, delta, epsilon and zeta subunits.

The protein localises to the cytoplasm. Its subcellular location is the golgi apparatus membrane. The protein resides in the cytoplasmic vesicle. It localises to the COPI-coated vesicle membrane. It is found in the endoplasmic reticulum. In terms of biological role, the coatomer is a cytosolic protein complex that binds to dilysine motifs and reversibly associates with Golgi non-clathrin-coated vesicles, which further mediate biosynthetic protein transport from the ER, via the Golgi up to the trans Golgi network. Coatomer complex is required for budding from Golgi membranes, and is essential for the retrograde Golgi-to-ER transport of dilysine-tagged proteins. The protein is Coatomer subunit gamma of Anopheles gambiae (African malaria mosquito).